The chain runs to 375 residues: Putative nuclease YhcG (375 aa).

Interacts with DNA processing enzymes, including the restriction complex HsdMRS, the integrases IntF and IntS, and the recombinase PinE.

Its function is as follows. May be a nuclease involved in DNA recombination and repair. This is Putative nuclease YhcG (yhcG) from Escherichia coli (strain K12).